A 141-amino-acid chain; its full sequence is Protein MGF 100-2L (141 aa).

It belongs to the asfivirus MGF 100 family.

Its function is as follows. Plays a role in virus cell tropism, and may be required for efficient virus replication in macrophages. The polypeptide is Protein MGF 100-2L (African swine fever virus (isolate Tick/South Africa/Pretoriuskop Pr4/1996) (ASFV)).